The sequence spans 1045 residues: Collagen alpha-1(VI) chain (1045 aa).

The signal sequence occupies residues 1-24 (MKMLQGRLPLTVLHLFLLLGGGMT). Residues 65–255 (DIFFVLDTSE…LTDDEIDNTI (191 aa)) form the VWFA 1 domain. The interval 277-613 (PSRGLSGPSG…GPPGPGGPPG (337 aa)) is disordered. Residues 280–540 (GLSGPSGPPG…RGDDGRPGNG (261 aa)) form a triple-helical region region. Residues 297 to 309 (PGLPGDRGLPGDP) show a composition bias toward low complexity. Over residues 327 to 360 (QGIRGEKGGRGAKGSKGDKGKRGIDGVDGQKGED) the composition is skewed to basic and acidic residues. Residues 375-392 (DGAPGSSGPKGDPGPYGT) are compositionally biased toward low complexity. Gly residues predominate over residues 400-409 (GTPGTGGRPG). Short sequence motifs (cell attachment site) lie at residues 501-503 (RGD) and 554-556 (RGD). The span at 600-613 (EGPPGPPGPGGPPG) shows a compositional bias: pro residues. VWFA domains follow at residues 638–825 (DLLF…LHNV) and 849–1035 (DITM…YQSI).

It belongs to the type VI collagen family.

It is found in the secreted. The protein localises to the extracellular space. It localises to the extracellular matrix. Functionally, collagen VI acts as a cell-binding protein. This is Collagen alpha-1(VI) chain (col6a1) from Xenopus laevis (African clawed frog).